A 328-amino-acid chain; its full sequence is D-cysteine desulfhydrase (328 aa).

K51 carries the N6-(pyridoxal phosphate)lysine modification.

The protein belongs to the ACC deaminase/D-cysteine desulfhydrase family. As to quaternary structure, homodimer. Pyridoxal 5'-phosphate is required as a cofactor.

It catalyses the reaction D-cysteine + H2O = hydrogen sulfide + pyruvate + NH4(+) + H(+). Functionally, catalyzes the alpha,beta-elimination reaction of D-cysteine and of several D-cysteine derivatives. It could be a defense mechanism against D-cysteine. In Escherichia fergusonii (strain ATCC 35469 / DSM 13698 / CCUG 18766 / IAM 14443 / JCM 21226 / LMG 7866 / NBRC 102419 / NCTC 12128 / CDC 0568-73), this protein is D-cysteine desulfhydrase.